Here is a 179-residue protein sequence, read N- to C-terminus: RNA polymerase sigma-E factor (179 aa).

The short motif at 36–49 is the Polymerase core binding element; it reads DLLQTALVRTYGRW. Positions 130–149 form a DNA-binding region, H-T-H motif; it reads TEETAAALGMSAGTVKSTLH.

This sequence belongs to the sigma-70 factor family. ECF subfamily.

Its subcellular location is the cytoplasm. Functionally, sigma factors are initiation factors that promote the attachment of RNA polymerase to specific initiation sites and are then released. This sigma factor is required for normal cell wall integrity; it is recruited by RNA polymerase to transcribe genes with cell wall-related functions. In Streptomyces avermitilis (strain ATCC 31267 / DSM 46492 / JCM 5070 / NBRC 14893 / NCIMB 12804 / NRRL 8165 / MA-4680), this protein is RNA polymerase sigma-E factor (sigE).